The chain runs to 87 residues: U3-theraphotoxin-Hhn1c (87 aa).

The signal sequence occupies residues 1–24 (MVNMKASMFLTFAGLVLLFVVCHA). Positions 25–52 (SESEEKEFPKEMLSSIFAVDDDFKQEER) are excised as a propeptide. 3 disulfide bridges follow: cysteine 54–cysteine 67, cysteine 61–cysteine 72, and cysteine 66–cysteine 79.

This sequence belongs to the neurotoxin 10 (Hwtx-1) family. 51 (Hntx-8) subfamily. Hntx-8 sub-subfamily. In terms of tissue distribution, expressed by the venom gland.

Its subcellular location is the secreted. Its function is as follows. Ion channel inhibitor. The polypeptide is U3-theraphotoxin-Hhn1c (Cyriopagopus hainanus (Chinese bird spider)).